The following is a 161-amino-acid chain: Transcriptional repressor NrdR (161 aa).

Over residues 1–11 the composition is skewed to basic residues; the sequence is MQCPHCQHHNS. Residues 1-21 form a disordered region; the sequence is MQCPHCQHHNSRVLESRSSEG. A zinc finger lies at 3–34; the sequence is CPHCQHHNSRVLESRSSEGGQSIRRRRECLEC. The region spanning 49–139 is the ATP-cone domain; sequence VTVIKQDGER…VYGRFQGIAD (91 aa).

This sequence belongs to the NrdR family. The cofactor is Zn(2+).

In terms of biological role, negatively regulates transcription of bacterial ribonucleotide reductase nrd genes and operons by binding to NrdR-boxes. This is Transcriptional repressor NrdR from Synechocystis sp. (strain ATCC 27184 / PCC 6803 / Kazusa).